The primary structure comprises 581 residues: Probable bifunctional SAT/APS kinase 2 (581 aa).

Positions 1–200 are adenylsulfate kinase; the sequence is MSGFVVWFTG…AAGGARGLIA (200 aa). 10 to 17 contributes to the ATP binding site; that stretch reads GLSGAGKS. Serine 84 acts as the Phosphoserine intermediate in catalysis. A sulfate adenylyltransferase region spans residues 201 to 581; that stretch reads PHGGELVNRW…ILIESMRSSS (381 aa).

This sequence in the N-terminal section; belongs to the APS kinase family. The protein in the C-terminal section; belongs to the sulfate adenylyltransferase family.

The enzyme catalyses sulfate + ATP + H(+) = adenosine 5'-phosphosulfate + diphosphate. It catalyses the reaction adenosine 5'-phosphosulfate + ATP = 3'-phosphoadenylyl sulfate + ADP + H(+). It functions in the pathway sulfur metabolism; hydrogen sulfide biosynthesis; sulfite from sulfate: step 1/3. The protein operates within sulfur metabolism; hydrogen sulfide biosynthesis; sulfite from sulfate: step 2/3. The chain is Probable bifunctional SAT/APS kinase 2 (sat2/cysC2) from Sorangium cellulosum (strain So ce56) (Polyangium cellulosum (strain So ce56)).